Here is a 689-residue protein sequence, read N- to C-terminus: Glycine--tRNA ligase beta subunit (689 aa).

It belongs to the class-II aminoacyl-tRNA synthetase family. Tetramer of two alpha and two beta subunits.

It localises to the cytoplasm. The catalysed reaction is tRNA(Gly) + glycine + ATP = glycyl-tRNA(Gly) + AMP + diphosphate. The protein is Glycine--tRNA ligase beta subunit of Edwardsiella ictaluri (strain 93-146).